The chain runs to 105 residues: MSAVIKHSEERLMKVLLAPVISEKATFVAEKNEQVVFLVMPDATKLEIKAAVELLFKVQVESVQVANRQGKQKRSGRFNGRRNHTRRAFVCLKPGQEINFTEEAK.

It belongs to the universal ribosomal protein uL23 family. In terms of assembly, part of the 50S ribosomal subunit. Contacts protein L29, and trigger factor when it is bound to the ribosome.

Its function is as follows. One of the early assembly proteins it binds 23S rRNA. One of the proteins that surrounds the polypeptide exit tunnel on the outside of the ribosome. Forms the main docking site for trigger factor binding to the ribosome. The sequence is that of Large ribosomal subunit protein uL23 from Herminiimonas arsenicoxydans.